Reading from the N-terminus, the 468-residue chain is MSSGKIAQVVGPVVDVVFANGEKLPEINNALIVYKDSDKKQKIVLEVALELGDGMVRTIAMESTDGLTRGLEVLDTGRAISVPVGKETLGRVFNVLGETIDLDEPFAADAAREPIHKKAPAFDELSTSSEILETGIKVIDLLAPYLKGGKVGLFGGAGVGKTVLIQELIHNIAQEHGGISVFTGVGERTREGNDLYWEMKESGVIEKTAMVFGQMNEPPGARMRVALTGLTIAEYFRDVEGQDVLLFIDNIFRFTQAGSEVSALLGRMPSAVGYQPTLATEMGQLQERITSTNKGSVTSIQAIYVPADDYTDPAPATAFAHLDSTTNLERKLTQMGIYPAVDPLASSSRALSPEIVGQEHYEVATEVQRVLQRYRELQDIIAILGMDELSDDEKVLVGRARRIQFFLSQNFNVAEQFTGQPGSYVPVADTVRSFKEILEGKYDHIPEDAFRSVGPIEDVLEKAKSMGY.

Residue 155–162 (GGAGVGKT) participates in ATP binding.

It belongs to the ATPase alpha/beta chains family. As to quaternary structure, F-type ATPases have 2 components, CF(1) - the catalytic core - and CF(0) - the membrane proton channel. CF(1) has five subunits: alpha(3), beta(3), gamma(1), delta(1), epsilon(1). CF(0) has three main subunits: a(1), b(2) and c(9-12). The alpha and beta chains form an alternating ring which encloses part of the gamma chain. CF(1) is attached to CF(0) by a central stalk formed by the gamma and epsilon chains, while a peripheral stalk is formed by the delta and b chains.

The protein resides in the cell membrane. The catalysed reaction is ATP + H2O + 4 H(+)(in) = ADP + phosphate + 5 H(+)(out). Its function is as follows. Produces ATP from ADP in the presence of a proton gradient across the membrane. The catalytic sites are hosted primarily by the beta subunits. The sequence is that of ATP synthase subunit beta from Streptococcus uberis (strain ATCC BAA-854 / 0140J).